A 1005-amino-acid polypeptide reads, in one-letter code: DNA polymerase (1005 aa).

It belongs to the DNA polymerase type-B family. In terms of assembly, interacts with OPG148. Component of the Uracil-DNA glycosylase(UDG)-OPG148-polymerase complex; OPG148 and OPG116/UDG form a heterodimeric processivity factor that associates with OPG071 to form the processive polymerase holoenzyme.

It catalyses the reaction DNA(n) + a 2'-deoxyribonucleoside 5'-triphosphate = DNA(n+1) + diphosphate. Catalyzes DNA synthesis. Acquires processivity by associating with a heterodimeric processivity factor comprised of the viral OPG148 and OPG116 proteins, thereby forming the DNA polymerase holoenzyme. Displays 3'- to 5' exonuclease activity. Might participate in viral DNA recombination. Does not perform OPG116/D4synthesis across an abasic site. This chain is DNA polymerase (OPG071), found in Variola virus (isolate Human/India/Ind3/1967) (VARV).